The following is a 121-amino-acid chain: Small ribosomal subunit protein uS13 (121 aa).

The interval 99-121 (RGQRTRTNSRTRKGPRRKIMKKK) is disordered. Over residues 101-121 (QRTRTNSRTRKGPRRKIMKKK) the composition is skewed to basic residues.

It belongs to the universal ribosomal protein uS13 family. As to quaternary structure, part of the 30S ribosomal subunit. Forms a loose heterodimer with protein S19. Forms two bridges to the 50S subunit in the 70S ribosome.

Located at the top of the head of the 30S subunit, it contacts several helices of the 16S rRNA. In the 70S ribosome it contacts the 23S rRNA (bridge B1a) and protein L5 of the 50S subunit (bridge B1b), connecting the 2 subunits; these bridges are implicated in subunit movement. Contacts the tRNAs in the A and P-sites. This chain is Small ribosomal subunit protein uS13, found in Thermodesulfovibrio yellowstonii (strain ATCC 51303 / DSM 11347 / YP87).